The sequence spans 222 residues: DnaJ homolog subfamily B member 9 (222 aa).

A signal peptide spans 1-23; sequence MATPQSVFVFAICILMITELILA. The region spanning 26 to 90 is the J domain; that stretch reads SYYDILGVPK…HRRKEYDTVG (65 aa). A divergent targeting domain region spans residues 91 to 222; the sequence is HTAFTNGKGQ…VTTYTDCSGQ (132 aa). Phosphoserine is present on serine 133.

As to quaternary structure, interacts with HSPA5/BiP; interaction is direct. Interacts with ERN1/IRE1 (via the luminal region). Interacts with DERL1.

Its subcellular location is the endoplasmic reticulum lumen. In terms of biological role, co-chaperone for Hsp70 protein HSPA5/BiP that acts as a key repressor of the ERN1/IRE1-mediated unfolded protein response (UPR). J domain-containing co-chaperones stimulate the ATPase activity of Hsp70 proteins and are required for efficient substrate recognition by Hsp70 proteins. In the unstressed endoplasmic reticulum, interacts with the luminal region of ERN1/IRE1 and selectively recruits HSPA5/BiP: HSPA5/BiP disrupts the dimerization of the active ERN1/IRE1 luminal region, thereby inactivating ERN1/IRE1. Also involved in endoplasmic reticulum-associated degradation (ERAD) of misfolded proteins. Required for survival of B-cell progenitors and normal antibody production. This Cricetulus griseus (Chinese hamster) protein is DnaJ homolog subfamily B member 9.